The primary structure comprises 293 residues: 33 kDa chaperonin (293 aa).

Disulfide bonds link Cys237–Cys239 and Cys271–Cys274.

Belongs to the HSP33 family. Post-translationally, under oxidizing conditions two disulfide bonds are formed involving the reactive cysteines. Under reducing conditions zinc is bound to the reactive cysteines and the protein is inactive.

It localises to the cytoplasm. Functionally, redox regulated molecular chaperone. Protects both thermally unfolding and oxidatively damaged proteins from irreversible aggregation. Plays an important role in the bacterial defense system toward oxidative stress. The sequence is that of 33 kDa chaperonin from Haemophilus influenzae (strain ATCC 51907 / DSM 11121 / KW20 / Rd).